The following is a 511-amino-acid chain: MKDNKIIIFDTTLRDGEQALGSSLGINQKLQIALALENLGVDVIEAGFPVSSQGDFKAVQKIASKVKNSTICALSRALDKDIDMAYEALKVAKHFRIHTFIATSTLHMQDKLKKDFDEILSMAKRAIIRARSYTDDVEFSCEDAGRTPIDNLCFMVENAIKAGAKTINIPDTVGYTLPSEFANIIKILFNKVPNIDKAIISVHCHNDLGMATGNSLSAILQGARQIECTINGLGERAGNCALEEVVMAIKTRKDYLKGFYTDIKCENIFKTSKLVSAITNESIPSHKAIVGSNAFSHSSGIHQDGVLKNRQTYEIISPSAIGIHDNRMLMTARSGRAMIKTCLENLGYDENTYNLDDVYERFLRLADKKGQVYDYDLEALMFLSYENEEENEFVIEKLSVISGNIPTACVCMRIKEELKTEACTGNGPVEAVFNCIARITNLKPVLKAYSINAKSSGVDAQGQVDVDLEFKGRKFHGKGLSTDVIEASAQAFASAYNAIYRSLKVEERKMA.

Residues Ile-6–Phe-269 form the Pyruvate carboxyltransferase domain. 4 residues coordinate Mn(2+): Asp-15, His-203, His-205, and Asn-239. Positions Val-394–Ala-511 are regulatory domain.

It belongs to the alpha-IPM synthase/homocitrate synthase family. LeuA type 1 subfamily. In terms of assembly, homodimer. Requires Mn(2+) as cofactor.

The protein resides in the cytoplasm. It catalyses the reaction 3-methyl-2-oxobutanoate + acetyl-CoA + H2O = (2S)-2-isopropylmalate + CoA + H(+). It participates in amino-acid biosynthesis; L-leucine biosynthesis; L-leucine from 3-methyl-2-oxobutanoate: step 1/4. Its function is as follows. Catalyzes the condensation of the acetyl group of acetyl-CoA with 3-methyl-2-oxobutanoate (2-ketoisovalerate) to form 3-carboxy-3-hydroxy-4-methylpentanoate (2-isopropylmalate). The protein is 2-isopropylmalate synthase of Campylobacter jejuni (strain RM1221).